The chain runs to 105 residues: Pyrimidine/purine nucleoside phosphorylase (105 aa).

Belongs to the nucleoside phosphorylase PpnP family.

The enzyme catalyses a purine D-ribonucleoside + phosphate = a purine nucleobase + alpha-D-ribose 1-phosphate. It catalyses the reaction adenosine + phosphate = alpha-D-ribose 1-phosphate + adenine. The catalysed reaction is cytidine + phosphate = cytosine + alpha-D-ribose 1-phosphate. It carries out the reaction guanosine + phosphate = alpha-D-ribose 1-phosphate + guanine. The enzyme catalyses inosine + phosphate = alpha-D-ribose 1-phosphate + hypoxanthine. It catalyses the reaction thymidine + phosphate = 2-deoxy-alpha-D-ribose 1-phosphate + thymine. The catalysed reaction is uridine + phosphate = alpha-D-ribose 1-phosphate + uracil. It carries out the reaction xanthosine + phosphate = alpha-D-ribose 1-phosphate + xanthine. Functionally, catalyzes the phosphorolysis of diverse nucleosides, yielding D-ribose 1-phosphate and the respective free bases. Can use uridine, adenosine, guanosine, cytidine, thymidine, inosine and xanthosine as substrates. Also catalyzes the reverse reactions. This Cupriavidus taiwanensis (strain DSM 17343 / BCRC 17206 / CCUG 44338 / CIP 107171 / LMG 19424 / R1) (Ralstonia taiwanensis (strain LMG 19424)) protein is Pyrimidine/purine nucleoside phosphorylase.